The chain runs to 112 residues: Protein Churchill (112 aa).

The Zn(2+) site is built by Cys-2, Cys-5, Cys-30, Cys-33, His-59, Cys-61, Cys-64, His-66, His-71, Cys-88, and Cys-91.

This sequence belongs to the Churchill family.

In terms of biological role, transcriptional activator that mediates FGF signaling during neural development. Plays a role in the regulation of cell movement. Its function is as follows. Does not bind DNA by itself. This Homo sapiens (Human) protein is Protein Churchill (CHURC1).